Here is a 336-residue protein sequence, read N- to C-terminus: CMP-sialic acid transporter (336 aa).

Residues 1-9 lie on the Cytoplasmic side of the membrane; sequence MAPARENVS. A helical transmembrane segment spans residues 10–30; it reads LFFKLYCLTVMTLVAAAYTVA. At 31-45 the chain is on the lumenal side; the sequence is LRYTRTTAEELYFST. The chain crosses the membrane as a helical span at residues 46–64; sequence TAVCITEVIKLLISVGLLA. Lysine 55 serves as a coordination point for CMP-N-acetyl-beta-neuraminate. The Cytoplasmic portion of the chain corresponds to 65 to 87; it reads KETGSLGRFKASLSENVLGSPKE. The helical transmembrane segment at 88–108 threads the bilayer; the sequence is LAKLSVPSLVYAVQNNMAFLA. Position 101–102 (101–102) interacts with CMP-N-acetyl-beta-neuraminate; it reads QN. Residues 109–114 lie on the Lumenal side of the membrane; that stretch reads LSNLDA. Residues 115–135 traverse the membrane as a helical segment; that stretch reads AVYQVTYQLKIPCTALCTVLM. A CMP-N-acetyl-beta-neuraminate-binding site is contributed by 117-124; the sequence is YQVTYQLK. Over 136–141 the chain is Cytoplasmic; it reads LNRTLS. A helical membrane pass occupies residues 142-160; that stretch reads KLQWISVFMLCGGVTLVQW. Residues 161 to 175 are Lumenal-facing; sequence KPAQATKVVVAQNPL. The helical transmembrane segment at 176 to 196 threads the bilayer; that stretch reads LGFGAIAIAVLCSGFAGVYFE. Serine 188 contributes to the CMP-N-acetyl-beta-neuraminate binding site. Residues 197–209 are Cytoplasmic-facing; that stretch reads KVLKSSDTSLWVR. 210–214 contributes to the CMP-N-acetyl-beta-neuraminate binding site; it reads NIQMY. A helical membrane pass occupies residues 210 to 228; that stretch reads NIQMYLSGIVVTLAGTYLS. Residues 229-243 are Lumenal-facing; the sequence is DGAEIQEKGFFYGYT. Residues 244–262 traverse the membrane as a helical segment; the sequence is YYVWFVIFLASVGGLYTSV. The Cytoplasmic segment spans residues 263 to 269; sequence VVKYTDN. The chain crosses the membrane as a helical span at residues 270 to 288; the sequence is IMKGFSAAAAIVLSTIASV. Position 272 (lysine 272) interacts with CMP-N-acetyl-beta-neuraminate. The Lumenal portion of the chain corresponds to 289–296; it reads LLFGLQIT. Residues 297 to 315 form a helical membrane-spanning segment; sequence LSFALGALLVCVSIYLYGL. The Cytoplasmic segment spans residues 316-336; sequence PRQDTTSIQQEATSKERIIGV. The interval 316-336 is disordered; that stretch reads PRQDTTSIQQEATSKERIIGV.

This sequence belongs to the nucleotide-sugar transporter family. SLC35A subfamily. In terms of assembly, monomer. As to expression, ubiquitous. Found in all the tissues examined including skeletal muscle, brain, heart, liver, kidney and spleen.

The protein resides in the golgi apparatus membrane. It carries out the reaction CMP-N-acetyl-beta-neuraminate(in) + CMP(out) = CMP-N-acetyl-beta-neuraminate(out) + CMP(in). It catalyses the reaction CMP-N-acetyl-beta-neuraminate(in) + AMP(out) = CMP-N-acetyl-beta-neuraminate(out) + AMP(in). The catalysed reaction is CDP-L-ribitol(in) + CDP(out) = CDP-L-ribitol(out) + CDP(in). The enzyme catalyses UMP(out) + CMP-N-acetyl-beta-neuraminate(in) = UMP(in) + CMP-N-acetyl-beta-neuraminate(out). Functionally, transports CMP-sialic acid from the cytosol into the Golgi apparatus, functioning as an antiporter that exchanges CMP-sialic acid for CMP. Binds both CMP-sialic acid and free CMP, but has higher affinity for free CMP. Also able to exchange CMP-sialic acid for AMP and UMP. Also mediates the transport of CDP-ribitol. The sequence is that of CMP-sialic acid transporter from Mus musculus (Mouse).